Consider the following 123-residue polypeptide: Ribonuclease P protein component 2 (123 aa).

Belongs to the eukaryotic/archaeal RNase P protein component 2 family. Consists of a catalytic RNA component and at least 4-5 protein subunits.

The protein resides in the cytoplasm. The enzyme catalyses Endonucleolytic cleavage of RNA, removing 5'-extranucleotides from tRNA precursor.. Functionally, part of ribonuclease P, a protein complex that generates mature tRNA molecules by cleaving their 5'-ends. The polypeptide is Ribonuclease P protein component 2 (Sulfurisphaera tokodaii (strain DSM 16993 / JCM 10545 / NBRC 100140 / 7) (Sulfolobus tokodaii)).